A 590-amino-acid polypeptide reads, in one-letter code: Putative laccase-19 (590 aa).

The signal sequence occupies residues 1–28 (MEKLSMVTSLLCAITVAVLAVAVVSGEA). 2 consecutive Plastocyanin-like domains span residues 36–152 (VVHE…PRDG) and 161–315 (KDVP…YAGA). N-linked (GlcNAc...) asparagine glycans are attached at residues Asn41 and Asn47. His86 and His88 together coordinate Cu cation. N-linked (GlcNAc...) asparagine glycosylation is present at Asn120. Positions 131 and 133 each coordinate Cu cation. Residues Asn205, Asn344, Asn378, Asn397, Asn434, and Asn465 are each glycosylated (N-linked (GlcNAc...) asparagine). A Plastocyanin-like 3 domain is found at 424–566 (DFPIRPPRPF…ATAFIVEDGP (143 aa)). Cu cation is bound by residues Asn483, His486, His488, His545, Cys546, His547, His551, and Met556. The disordered stretch occupies residues 565-590 (GPTPETSLPPPPPEFKRCGNNGLSQP).

Belongs to the multicopper oxidase family. Cu cation is required as a cofactor.

It localises to the secreted. Its subcellular location is the extracellular space. The protein localises to the apoplast. It carries out the reaction 4 hydroquinone + O2 = 4 benzosemiquinone + 2 H2O. Functionally, lignin degradation and detoxification of lignin-derived products. This chain is Putative laccase-19 (LAC19), found in Oryza sativa subsp. indica (Rice).